A 3004-amino-acid polypeptide reads, in one-letter code: Guanylate cyclase beta (3004 aa).

Topologically, residues 1-66 (MKETDKIKSE…FSLYNFIRRL (66 aa)) are cytoplasmic. A helical membrane pass occupies residues 67–87 (ISLDAVIVYTLFMTVYIFSEI). Residues 88–94 (SQGITKK) lie on the Extracellular side of the membrane. Residues 95–115 (YLFVDTAISLFLNIGILVVIE) form a helical membrane-spanning segment. Residues 116–300 (SLFELKLLKD…TFCIKMNNVV (185 aa)) are Cytoplasmic-facing. A helical transmembrane segment spans residues 301-321 (YYLIFMYILFVLLSIIIKAIF). Topologically, residues 322 to 334 (YRKGKLLENSNDT) are extracellular. The N-linked (GlcNAc...) asparagine glycan is linked to Asn332. A helical membrane pass occupies residues 335 to 355 (FFTVLEDFIGLYILVLPVMLY). Over 356-991 (SEKSLIYIIQ…GRLNRFSLCR (636 aa)) the chain is Cytoplasmic. The chain crosses the membrane as a helical span at residues 992–1012 (AFLWIIYLKVMIGSFYFFHNF). The Extracellular portion of the chain corresponds to 1013–1022 (DNFFSGSSIS). Residues 1023-1043 (SILYSQTAFAIFHYSLIVAFA) form a helical membrane-spanning segment. Over 1044-1072 (SYEIDIPYKFIRNFPYIYQLARRKYFLNN) the chain is Cytoplasmic. The helical transmembrane segment at 1073 to 1093 (TIIFLNIVESIFSSFISYYIL) threads the bilayer. Over 1094–1105 (RGNLFNLITHRK) the chain is Extracellular. A helical membrane pass occupies residues 1106–1126 (FTFHIFVLNFFLISEKILLFS). The Cytoplasmic segment spans residues 1127–1130 (KTWH). Residues 1131–1151 (IFFFIMTIIIVSILFIYINIY) form a helical membrane-spanning segment. Residues 1152–1171 (TLVDCLITGKCEFSLFDPED) are Extracellular-facing. Residues 1172–1192 (SYFWISLLPILYINFIIDKFM) form a helical membrane-spanning segment. The Cytoplasmic portion of the chain corresponds to 1193–1297 (KFVKNKIYPD…YEKRNKLKLR (105 aa)). A helical membrane pass occupies residues 1298–1318 (IIILLLFIIFLITFTIQIIIS). The Extracellular portion of the chain corresponds to 1319 to 1327 (KFIEKKLHS). A helical transmembrane segment spans residues 1328–1348 (LSYLTVIYYIVAVLYLIKILI). Topologically, residues 1349 to 1353 (RNKTN) are cytoplasmic. The chain crosses the membrane as a helical span at residues 1354-1374 (YTYFYIIGKLLLVIGYLLEIS). The Extracellular segment spans residues 1375–1394 (ENSVNNIINMLVTYSFTVCY). The helical transmembrane segment at 1395–1415 (IFFISFKILEGLVMCIIILSI) threads the bilayer. Residues 1416–1457 (AIWVYYHKNNNLNAMCTDFCDNPYTSLDNLEYINISCICKQQ) lie on the Cytoplasmic side of the membrane. Residues 1458 to 1478 (IFTFLICTLSFTLICLFMKYY) form a helical membrane-spanning segment. Residues 1479–1500 (EIYYLKKKFLTRYKQKVNLGKQ) lie on the Extracellular side of the membrane. A helical transmembrane segment spans residues 1501 to 1521 (IEILHTMLPSFLVEYLLVSDP). The Cytoplasmic segment spans residues 1522 to 2563 (KADGIMVGKN…EIINIDLTKK (1042 aa)). Residues 1541–1696 (SVIFCDIDDF…DTVNTASRMK (156 aa)) form the Guanylate cyclase 1 domain. Polar residues predominate over residues 2463–2476 (TMSNSKSGQTNITT). The interval 2463 to 2491 (TMSNSKSGQTNITTDNKKSQIKKNGDVNK) is disordered. Basic and acidic residues predominate over residues 2477–2488 (DNKKSQIKKNGD). The helical transmembrane segment at 2564–2584 (LIIIFVISELILSLCNVIELS) threads the bilayer. At 2585-2594 (YYENKETPND) the chain is on the extracellular side. A helical transmembrane segment spans residues 2595-2615 (FIVIIWLIRSIYLFTITFIWL). The Cytoplasmic segment spans residues 2616 to 2634 (LLKTKLKEYKDNSSKMMWT). Residues 2635-2655 (TFILNIFLSSWGIIMIDLACI) form a helical membrane-spanning segment. Residues 2656–2667 (HYSNLVGNSRER) are Extracellular-facing. Residues 2668-2688 (SIFFMKDATELIISMQLIFVK) form a helical membrane-spanning segment. Topologically, residues 2689–2695 (NMLFKHK) are cytoplasmic. The chain crosses the membrane as a helical span at residues 2696-2716 (FFFFVFFFVFLMYSFFKLFVI). Topologically, residues 2717–2722 (HVCELR) are extracellular. The chain crosses the membrane as a helical span at residues 2723–2743 (ICCSILLILSINILYFWYSEY). The Cytoplasmic portion of the chain corresponds to 2744–3004 (LDRTQYIIKR…KLREQNKVKG (261 aa)). One can recognise a Guanylate cyclase 2 domain in the interval 2793–2927 (AFLFADIVGF…LDVLIANHIE (135 aa)). 3 residues coordinate Mg(2+): Asp2798, Ile2799, and Asp2842.

In the N-terminal section; belongs to the cation transport ATPase (P-type) (TC 3.A.3) family. Type IV subfamily. The protein in the C-terminal section; belongs to the adenylyl cyclase class-4/guanylyl cyclase family. The cofactor is Mg(2+). Mn(2+) is required as a cofactor.

It localises to the membrane. The enzyme catalyses GTP = 3',5'-cyclic GMP + diphosphate. In terms of biological role, catalyzes the synthesis of the second messenger cGMP from GTP. Probably by regulating cGMP production, required for ookinete gliding motility, which is necessary for the ookinete to traverse the midgut epithelium of the mosquito. This Plasmodium berghei (strain Anka) protein is Guanylate cyclase beta.